The chain runs to 426 residues: MFRTKRSALVRRLWRSRAPGGEDEEEGAGGGGGGGELRGEGATDSRAHGAGGGGPGRAGCCLGKAVRGAKGHHHPHPPAAGAGAAGGAEADLKALTHSVLKKLKERQLELLLQAVESRGGTRTACLLLPGRLDCRLGPGAPAGAQPAQPPSSYSLPLLLCKVFRWPDLRHSSEVKRLCCCESYGKINPELVCCNPHHLSRLCELESPPPPYSRYPMDFLKPTADCPDAVPSSAETGGTNYLAPGGLSDSQLLLEPGDRSHWCVVAYWEEKTRVGRLYCVQEPSLDIFYDLPQGNGFCLGQLNSDNKSQLVQKVRSKIGCGIQLTREVDGVWVYNRSSYPIFIKSATLDNPDSRTLLVHKVFPGFSIKAFDYEKAYSLQRPNDHEFMQQPWTGFTVQISFVKGWGQCYTRQFISSCPCWLEVIFNSR.

Residues 13–55 (LWRSRAPGGEDEEEGAGGGGGGGELRGEGATDSRAHGAGGGGP) form a disordered region. A compositionally biased stretch (basic and acidic residues) spans 37–47 (LRGEGATDSRA). An N6-acetyllysine; alternate mark is found at Lys-64 and Lys-70. Glycyl lysine isopeptide (Lys-Gly) (interchain with G-Cter in ubiquitin); alternate cross-links involve residues Lys-64 and Lys-70. The 144-residue stretch at 64-207 (KAVRGAKGHH…LSRLCELESP (144 aa)) folds into the MH1 domain. 4 residues coordinate Zn(2+): Cys-125, Cys-180, Cys-192, and His-197. The PY-motif signature appears at 208–211 (PPPY). Residues 208–217 (PPPYSRYPMD) are important for interaction with SMURF2. Residue Ser-249 is modified to Phosphoserine. The region spanning 261–426 (WCVVAYWEEK…CWLEVIFNSR (166 aa)) is the MH2 domain.

This sequence belongs to the dwarfin/SMAD family. Interacts with WWP1. Interacts with COPS5. Interacts with NEDD4L. Interacts with STAMBP. Interacts with RNF111, AXIN1 and AXIN2. Interacts with PPP1R15A. Interacts (via MH2 domain) with EP300. Interacts with ACVR1B, SMURF1, SMURF2 and TGFBR1; SMAD7 recruits SMURF1 and SMURF2 to the TGF-beta receptor and regulates its degradation. Interacts with PDPK1 (via PH domain). Interacts with TSC22D1/TSC-22; the interaction requires TGF-beta and the interaction is inhibited by TGFBR1. Post-translationally, phosphorylation on Ser-249 does not affect its stability, nuclear localization or inhibitory function in TGFB signaling; however it affects its ability to regulate transcription. Phosphorylated by PDPK1. In terms of processing, ubiquitinated by WWP1. Polyubiquitinated by RNF111, which is enhanced by AXIN1 and promotes proteasomal degradation. In response to TGF-beta, ubiquitinated by SMURF1; which promotes its degradation. Acetylation prevents ubiquitination and degradation mediated by SMURF1. Ubiquitous with higher expression in the lung and vascular endothelium.

The protein localises to the nucleus. It is found in the cytoplasm. Functionally, antagonist of signaling by TGF-beta (transforming growth factor) type 1 receptor superfamily members; has been shown to inhibit TGF-beta (Transforming growth factor) and activin signaling by associating with their receptors thus preventing SMAD2 access. Functions as an adapter to recruit SMURF2 to the TGF-beta receptor complex. Also acts by recruiting the PPP1R15A-PP1 complex to TGFBR1, which promotes its dephosphorylation. Positively regulates PDPK1 kinase activity by stimulating its dissociation from the 14-3-3 protein YWHAQ which acts as a negative regulator. The sequence is that of Mothers against decapentaplegic homolog 7 (SMAD7) from Homo sapiens (Human).